Reading from the N-terminus, the 232-residue chain is Sugar fermentation stimulation protein homolog (232 aa).

The protein belongs to the SfsA family.

The sequence is that of Sugar fermentation stimulation protein homolog from Geobacter sulfurreducens (strain ATCC 51573 / DSM 12127 / PCA).